Consider the following 1080-residue polypeptide: Zorya protein ZorD (1080 aa).

Positions 596–779 (LRSPEETAGC…WSLFDFAQPG (184 aa)) constitute a Helicase ATP-binding domain. In terms of domain architecture, Helicase C-terminal spans 904–1069 (KLNWLLKILA…DMLCATPDLS (166 aa)).

In terms of biological role, component of antiviral defense system Zorya type I, composed of ZorA, ZorB, ZorC and ZorD. Expression of Zorya type I in E.coli (strain MG1655) confers 10,000-fold resistance to phage SECphi27, 100-fold resistance to lambda, and 10-fold resistance to T7. While most T7 infected Zorya-containing cells undergo abortive infection, a minority produce viable phage progeny. These eventually accumulate to a high multiplicity of infection, leading to culture collapse by 2 hours after initial infection. ZorA and ZorB probably assemble in the cell inner membrane and exert their effect there. This may have ATPase activity. The protein is Zorya protein ZorD of Escherichia coli O139:H28 (strain E24377A / ETEC).